Consider the following 146-residue polypeptide: 3-hydroxyacyl-[acyl-carrier-protein] dehydratase FabZ (146 aa).

The active site involves His48.

The protein belongs to the thioester dehydratase family. FabZ subfamily.

It localises to the cytoplasm. The enzyme catalyses a (3R)-hydroxyacyl-[ACP] = a (2E)-enoyl-[ACP] + H2O. In terms of biological role, involved in unsaturated fatty acids biosynthesis. Catalyzes the dehydration of short chain beta-hydroxyacyl-ACPs and long chain saturated and unsaturated beta-hydroxyacyl-ACPs. This is 3-hydroxyacyl-[acyl-carrier-protein] dehydratase FabZ from Teredinibacter turnerae (strain ATCC 39867 / T7901).